The sequence spans 202 residues: Nucleoside triphosphate pyrophosphatase (202 aa).

D79 functions as the Proton acceptor in the catalytic mechanism.

This sequence belongs to the Maf family. Requires a divalent metal cation as cofactor.

The protein resides in the cytoplasm. The enzyme catalyses a ribonucleoside 5'-triphosphate + H2O = a ribonucleoside 5'-phosphate + diphosphate + H(+). It carries out the reaction a 2'-deoxyribonucleoside 5'-triphosphate + H2O = a 2'-deoxyribonucleoside 5'-phosphate + diphosphate + H(+). Nucleoside triphosphate pyrophosphatase. May have a dual role in cell division arrest and in preventing the incorporation of modified nucleotides into cellular nucleic acids. This Bradyrhizobium diazoefficiens (strain JCM 10833 / BCRC 13528 / IAM 13628 / NBRC 14792 / USDA 110) protein is Nucleoside triphosphate pyrophosphatase.